Reading from the N-terminus, the 469-residue chain is Aspartyl/glutamyl-tRNA(Asn/Gln) amidotransferase subunit B (469 aa).

This sequence belongs to the GatB/GatE family. GatB subfamily. In terms of assembly, heterotrimer of A, B and C subunits.

It carries out the reaction L-glutamyl-tRNA(Gln) + L-glutamine + ATP + H2O = L-glutaminyl-tRNA(Gln) + L-glutamate + ADP + phosphate + H(+). The catalysed reaction is L-aspartyl-tRNA(Asn) + L-glutamine + ATP + H2O = L-asparaginyl-tRNA(Asn) + L-glutamate + ADP + phosphate + 2 H(+). Its function is as follows. Allows the formation of correctly charged Asn-tRNA(Asn) or Gln-tRNA(Gln) through the transamidation of misacylated Asp-tRNA(Asn) or Glu-tRNA(Gln) in organisms which lack either or both of asparaginyl-tRNA or glutaminyl-tRNA synthetases. The reaction takes place in the presence of glutamine and ATP through an activated phospho-Asp-tRNA(Asn) or phospho-Glu-tRNA(Gln). This chain is Aspartyl/glutamyl-tRNA(Asn/Gln) amidotransferase subunit B, found in Methanococcus vannielii (strain ATCC 35089 / DSM 1224 / JCM 13029 / OCM 148 / SB).